We begin with the raw amino-acid sequence, 206 residues long: Small ribosomal subunit protein uS4 (206 aa).

Positions 96 to 156 (CRLDNVVYRM…EKAKNQLRIA (61 aa)) constitute an S4 RNA-binding domain.

It belongs to the universal ribosomal protein uS4 family. As to quaternary structure, part of the 30S ribosomal subunit. Contacts protein S5. The interaction surface between S4 and S5 is involved in control of translational fidelity.

Functionally, one of the primary rRNA binding proteins, it binds directly to 16S rRNA where it nucleates assembly of the body of the 30S subunit. In terms of biological role, with S5 and S12 plays an important role in translational accuracy. The chain is Small ribosomal subunit protein uS4 from Azotobacter vinelandii (strain DJ / ATCC BAA-1303).